Here is a 451-residue protein sequence, read N- to C-terminus: Tubulin alpha-1 chain (451 aa).

Gln-11 is a GTP binding site. An N6-acetyllysine modification is found at Lys-40. Residues Glu-71, Gly-144, Thr-145, Thr-179, Asn-206, and Asn-228 each coordinate GTP. Glu-71 contributes to the Mg(2+) binding site. Glu-254 is an active-site residue.

It belongs to the tubulin family. As to quaternary structure, dimer of alpha and beta chains. A typical microtubule is a hollow water-filled tube with an outer diameter of 25 nm and an inner diameter of 15 nM. Alpha-beta heterodimers associate head-to-tail to form protofilaments running lengthwise along the microtubule wall with the beta-tubulin subunit facing the microtubule plus end conferring a structural polarity. Microtubules usually have 13 protofilaments but different protofilament numbers can be found in some organisms and specialized cells. Mg(2+) is required as a cofactor. In terms of processing, undergoes a tyrosination/detyrosination cycle, the cyclic removal and re-addition of a C-terminal tyrosine residue by the enzymes tubulin tyrosine carboxypeptidase (TTCP) and tubulin tyrosine ligase (TTL), respectively. Acetylation of alpha chains at Lys-40 stabilizes microtubules and affects affinity and processivity of microtubule motors. This modification has a role in multiple cellular functions, ranging from cell motility, cell cycle progression or cell differentiation to intracellular trafficking and signaling.

It is found in the cytoplasm. The protein resides in the cytoskeleton. It catalyses the reaction GTP + H2O = GDP + phosphate + H(+). Its function is as follows. Tubulin is the major constituent of microtubules, a cylinder consisting of laterally associated linear protofilaments composed of alpha- and beta-tubulin heterodimers. Microtubules grow by the addition of GTP-tubulin dimers to the microtubule end, where a stabilizing cap forms. Below the cap, tubulin dimers are in GDP-bound state, owing to GTPase activity of alpha-tubulin. This is Tubulin alpha-1 chain (TUBA1) from Zea mays (Maize).